The chain runs to 326 residues: Glycolipid sulfotransferase MRA_1383 (326 aa).

40 to 45 is a 3'-phosphoadenylyl sulfate binding site; it reads KSGLTW. His97 functions as the Proton acceptor in the catalytic mechanism. 3'-phosphoadenylyl sulfate is bound at residue 116 to 124; sequence RDPRDAAVS.

It belongs to the sulfotransferase 1 family.

Involved in the synthesis of cell wall sulfolipids. The protein is Glycolipid sulfotransferase MRA_1383 of Mycobacterium tuberculosis (strain ATCC 25177 / H37Ra).